A 419-amino-acid polypeptide reads, in one-letter code: ATP-dependent RNA helicase RhlB (419 aa).

A Q motif motif is present at residues 9 to 37; it reads QRFSDLALHRIVQQAIKEKGFEFCTPIQA. A Helicase ATP-binding domain is found at 40–217; that stretch reads LPITLKGQDI…FEHMNDPQYV (178 aa). 53–60 serves as a coordination point for ATP; that stretch reads AQTGTGKT. The short motif at 163-166 is the DEAD box element; the sequence is DEAD. Residues 241 to 388 enclose the Helicase C-terminal domain; it reads KMALLMTLLE…VSQYDAKALI (148 aa).

This sequence belongs to the DEAD box helicase family. RhlB subfamily. As to quaternary structure, component of the RNA degradosome, which is a multiprotein complex involved in RNA processing and mRNA degradation.

It is found in the cytoplasm. The catalysed reaction is ATP + H2O = ADP + phosphate + H(+). In terms of biological role, DEAD-box RNA helicase involved in RNA degradation. Has RNA-dependent ATPase activity and unwinds double-stranded RNA. The polypeptide is ATP-dependent RNA helicase RhlB (Histophilus somni (strain 2336) (Haemophilus somnus)).